Here is a 203-residue protein sequence, read N- to C-terminus: Ras-related protein Rab-7L1 (203 aa).

Residues S33, K34, H35, Y36, K37, and T39 each coordinate GTP. Residues 36 to 44 (YKSTVGVDF) carry the Effector region motif. At T71 the chain carries Phosphothreonine; by LRRK2. Residue S72 is modified to Phosphoserine; by LRRK2. GTP-binding residues include K126, V156, and K157. 2 S-geranylgeranyl cysteine lipidation sites follow: C202 and C203.

It belongs to the small GTPase superfamily. Rab family. As to quaternary structure, interacts with LRRK2 (via the N-terminus); this interaction is direct and stimulates kinase activity. In terms of processing, in case of Salmonella enterica serovar Typhimurium (S.typhimurium) infection, is proteolytically cleaved between Gly-41 and Val-42 by the GtgE viral protease encoded on the Gifsy-2 lysogen bacteriophage, which therefore prevents the recruitment of RAB29 to S.typhimurium-containing vacuoles. In contrast, no proteolytically cleavage is detected in S.typhi-infected cells. As to expression, ubiquitous.

Its subcellular location is the cell membrane. It localises to the cytoplasm. It is found in the perinuclear region. The protein localises to the golgi apparatus. The protein resides in the golgi apparatus membrane. Its subcellular location is the trans-Golgi network. It localises to the vacuole. It is found in the cytoskeleton. In terms of biological role, the small GTPases Rab are key regulators in vesicle trafficking. Essential for maintaining the integrity of the endosome-trans-Golgi network structure. Together with LRRK2, plays a role in the retrograde trafficking pathway for recycling proteins, such as mannose 6 phosphate receptor (M6PR), between lysosomes and the Golgi apparatus in a retromer-dependent manner. Recruits LRRK2 to the Golgi complex and stimulates LRRK2 kinase activity. Stimulates phosphorylation of RAB10 'Thr-73' by LRRK2. Regulates neuronal process morphology in the intact central nervous system (CNS). May play a role in the formation of typhoid toxin transport intermediates during Salmonella enterica serovar Typhi (S.typhi) epithelial cell infection. This chain is Ras-related protein Rab-7L1 (RAB29), found in Homo sapiens (Human).